The chain runs to 221 residues: MALVVKDIVKNFGEGLSETKVLKGINFEVEQGEFVILNGASGSGKTTLLTILGGLLSQTSGTVLYNDAPLFDKQHRPSDLRLEDIGFIFQSSHLVPYLKVIEQLTLVGQEAGMTKQQSSTRAIQLLKNIGLEDRLNVYPHQLSGGEKQRVAIMRAFMNNPKIILADEPTASLDADRATKVVEMIRQQIKEQQMIGIMITHDRRLFEYADRVIELEDGKITD.

Residues Leu-3–Asp-221 form the ABC transporter domain. ATP is bound at residue Gly-39–Thr-46.

This sequence belongs to the ABC transporter superfamily. HrtA family. The complex is composed of two ATP-binding proteins (HrtA), two transmembrane proteins (HrtB) and a solute-binding protein.

Its subcellular location is the cell membrane. Its function is as follows. Part of the ABC transporter complex hrt involved in hemin import. Responsible for energy coupling to the transport system. The chain is Putative hemin import ATP-binding protein HrtA (hrtA) from Staphylococcus aureus (strain Mu50 / ATCC 700699).